The primary structure comprises 1226 residues: Methionine synthase (1226 aa).

A Hcy-binding domain is found at 7-327 (KVQIEKQLSE…EHIRQMALVV (321 aa)). Positions 249, 312, and 313 each coordinate Zn(2+). Positions 358 to 619 (FINVGERTNV…VPEDLREAVE (262 aa)) constitute a Pterin-binding domain. Positions 652–746 (SALEWRDWPV…FINASKEVGA (95 aa)) constitute a B12-binding N-terminal domain. Methylcob(III)alamin is bound by residues Glu-696, 758-762 (GDVHD), His-761, Ser-806, Thr-810, and Ala-862. Residues 748-883 (NGKILLATVK…SNELKPSFVE (136 aa)) enclose the B12-binding domain. Residues 899–1226 (KQPRTKPVTL…AEKWLGPNLN (328 aa)) form the AdoMet activation domain. S-adenosyl-L-methionine-binding positions include Asp-949, Arg-1137, and 1192–1193 (YF).

The protein belongs to the vitamin-B12 dependent methionine synthase family. The cofactor is methylcob(III)alamin. Requires Zn(2+) as cofactor.

The enzyme catalyses (6S)-5-methyl-5,6,7,8-tetrahydrofolate + L-homocysteine = (6S)-5,6,7,8-tetrahydrofolate + L-methionine. Its pathway is amino-acid biosynthesis; L-methionine biosynthesis via de novo pathway; L-methionine from L-homocysteine (MetH route): step 1/1. Its function is as follows. Catalyzes the transfer of a methyl group from methyl-cobalamin to homocysteine, yielding enzyme-bound cob(I)alamin and methionine. Subsequently, remethylates the cofactor using methyltetrahydrofolate. The sequence is that of Methionine synthase (metH) from Aliivibrio fischeri (Vibrio fischeri).